A 556-amino-acid polypeptide reads, in one-letter code: 2-succinyl-5-enolpyruvyl-6-hydroxy-3-cyclohexene-1-carboxylate synthase (556 aa).

The protein belongs to the TPP enzyme family. MenD subfamily. Homodimer. The cofactor is Mg(2+). Requires Mn(2+) as cofactor. Thiamine diphosphate is required as a cofactor.

It catalyses the reaction isochorismate + 2-oxoglutarate + H(+) = 5-enolpyruvoyl-6-hydroxy-2-succinyl-cyclohex-3-ene-1-carboxylate + CO2. It functions in the pathway quinol/quinone metabolism; 1,4-dihydroxy-2-naphthoate biosynthesis; 1,4-dihydroxy-2-naphthoate from chorismate: step 2/7. Its pathway is quinol/quinone metabolism; menaquinone biosynthesis. Catalyzes the thiamine diphosphate-dependent decarboxylation of 2-oxoglutarate and the subsequent addition of the resulting succinic semialdehyde-thiamine pyrophosphate anion to isochorismate to yield 2-succinyl-5-enolpyruvyl-6-hydroxy-3-cyclohexene-1-carboxylate (SEPHCHC). This is 2-succinyl-5-enolpyruvyl-6-hydroxy-3-cyclohexene-1-carboxylate synthase from Salmonella paratyphi C (strain RKS4594).